Reading from the N-terminus, the 193-residue chain is Inner membrane-spanning protein YciB (193 aa).

Transmembrane regions (helical) follow at residues 5-25 (TLDAIKPFLDWIPLIVFFYIY), 36-56 (IIAATTGLLIATLIVYGLMFV), 67-87 (WLVVVLTVVFGGLTMAFQDDF), 93-113 (APIINAVFAFGLAMSPLFLGG), 138-158 (VWVGFFTLMAVLQALFAFVWV), and 164-184 (FTAFGDMIVMVVFMVAQFWFL).

The protein belongs to the YciB family.

Its subcellular location is the cell inner membrane. Its function is as follows. Plays a role in cell envelope biogenesis, maintenance of cell envelope integrity and membrane homeostasis. The polypeptide is Inner membrane-spanning protein YciB (Vitreoscilla sp. (strain C1)).